A 454-amino-acid chain; its full sequence is tRNA modification GTPase MnmE (454 aa).

3 residues coordinate (6S)-5-formyl-5,6,7,8-tetrahydrofolate: Arg-23, Glu-80, and Lys-120. One can recognise a TrmE-type G domain in the interval 216–377 (GMKVVIAGRP…LRDHLKSSMG (162 aa)). Asn-226 provides a ligand contact to K(+). GTP-binding positions include 226-231 (NAGKSS), 245-251 (TDIAGTT), 270-273 (DTAG), 335-338 (NKAD), and 358-360 (SAR). Ser-230 serves as a coordination point for Mg(2+). K(+) is bound by residues Thr-245, Ile-247, and Thr-250. Residue Thr-251 participates in Mg(2+) binding. Lys-454 contributes to the (6S)-5-formyl-5,6,7,8-tetrahydrofolate binding site.

This sequence belongs to the TRAFAC class TrmE-Era-EngA-EngB-Septin-like GTPase superfamily. TrmE GTPase family. In terms of assembly, homodimer. Heterotetramer of two MnmE and two MnmG subunits. K(+) serves as cofactor.

It localises to the cytoplasm. Its function is as follows. Exhibits a very high intrinsic GTPase hydrolysis rate. Involved in the addition of a carboxymethylaminomethyl (cmnm) group at the wobble position (U34) of certain tRNAs, forming tRNA-cmnm(5)s(2)U34. The polypeptide is tRNA modification GTPase MnmE (Erwinia tasmaniensis (strain DSM 17950 / CFBP 7177 / CIP 109463 / NCPPB 4357 / Et1/99)).